Consider the following 201-residue polypeptide: Peptidyl-tRNA hydrolase (201 aa).

Position 17 (Tyr-17) interacts with tRNA. Catalysis depends on His-22, which acts as the Proton acceptor. 3 residues coordinate tRNA: Phe-76, Asn-78, and Asn-124.

It belongs to the PTH family. As to quaternary structure, monomer.

The protein resides in the cytoplasm. It catalyses the reaction an N-acyl-L-alpha-aminoacyl-tRNA + H2O = an N-acyl-L-amino acid + a tRNA + H(+). Hydrolyzes ribosome-free peptidyl-tRNAs (with 1 or more amino acids incorporated), which drop off the ribosome during protein synthesis, or as a result of ribosome stalling. Its function is as follows. Catalyzes the release of premature peptidyl moieties from peptidyl-tRNA molecules trapped in stalled 50S ribosomal subunits, and thus maintains levels of free tRNAs and 50S ribosomes. This chain is Peptidyl-tRNA hydrolase, found in Nitratidesulfovibrio vulgaris (strain ATCC 29579 / DSM 644 / CCUG 34227 / NCIMB 8303 / VKM B-1760 / Hildenborough) (Desulfovibrio vulgaris).